Here is a 141-residue protein sequence, read N- to C-terminus: MLNEFKAFIAKGNVMDLAVGVIIGGAFGGIVKSLVDDIIMPIVGAIFGGFDFSNYFLGLSSAVNAPTLAGARAQGAVLAYGSFITVLINFLILAWIIFLMVKGVNTLRAQVERKDNKVAEAAPPPADVQLLTEIRDLLAKR.

3 helical membrane passes run 14–34, 38–58, and 81–101; these read VMDLAVGVIIGGAFGGIVKSL, IIMPIVGAIFGGFDFSNYFLG, and GSFITVLINFLILAWIIFLMV.

This sequence belongs to the MscL family. Homopentamer.

It is found in the cell inner membrane. Functionally, channel that opens in response to stretch forces in the membrane lipid bilayer. May participate in the regulation of osmotic pressure changes within the cell. The chain is Large-conductance mechanosensitive channel from Rhizobium rhizogenes (strain K84 / ATCC BAA-868) (Agrobacterium radiobacter).